A 299-amino-acid polypeptide reads, in one-letter code: Oxygen-dependent coproporphyrinogen-III oxidase (299 aa).

Ser-92 is a substrate binding site. His-96 and His-106 together coordinate a divalent metal cation. His-106 acts as the Proton donor in catalysis. 108–110 (NVR) is a binding site for substrate. A divalent metal cation contacts are provided by His-145 and His-175. The important for dimerization stretch occupies residues 239-274 (YVEFNLVYDRGTLFGLQSGGRAESILMSLPPQVRWE). Position 257 to 259 (257 to 259 (GGR)) interacts with substrate.

It belongs to the aerobic coproporphyrinogen-III oxidase family. As to quaternary structure, homodimer. The cofactor is a divalent metal cation.

It is found in the cytoplasm. It carries out the reaction coproporphyrinogen III + O2 + 2 H(+) = protoporphyrinogen IX + 2 CO2 + 2 H2O. Its pathway is porphyrin-containing compound metabolism; protoporphyrin-IX biosynthesis; protoporphyrinogen-IX from coproporphyrinogen-III (O2 route): step 1/1. Involved in the heme biosynthesis. Catalyzes the aerobic oxidative decarboxylation of propionate groups of rings A and B of coproporphyrinogen-III to yield the vinyl groups in protoporphyrinogen-IX. In Xanthomonas campestris pv. campestris (strain B100), this protein is Oxygen-dependent coproporphyrinogen-III oxidase.